Reading from the N-terminus, the 552-residue chain is ATP synthase subunit alpha (552 aa).

173-180 (GDRQTGKT) provides a ligand contact to ATP. The interval 516 to 552 (DGKPLVNEPAPSPLDPGLVRQESIPVHRPAARKDDEG) is disordered.

This sequence belongs to the ATPase alpha/beta chains family. In terms of assembly, F-type ATPases have 2 components, CF(1) - the catalytic core - and CF(0) - the membrane proton channel. CF(1) has five subunits: alpha(3), beta(3), gamma(1), delta(1), epsilon(1). CF(0) has three main subunits: a(1), b(2) and c(9-12). The alpha and beta chains form an alternating ring which encloses part of the gamma chain. CF(1) is attached to CF(0) by a central stalk formed by the gamma and epsilon chains, while a peripheral stalk is formed by the delta and b chains.

Its subcellular location is the cell membrane. It carries out the reaction ATP + H2O + 4 H(+)(in) = ADP + phosphate + 5 H(+)(out). Its function is as follows. Produces ATP from ADP in the presence of a proton gradient across the membrane. The alpha chain is a regulatory subunit. In Frankia casuarinae (strain DSM 45818 / CECT 9043 / HFP020203 / CcI3), this protein is ATP synthase subunit alpha.